The sequence spans 1157 residues: ATP-dependent helicase/deoxyribonuclease subunit B (1157 aa).

The UvrD-like helicase ATP-binding domain occupies 1 to 299 (MSIRFIIGRA…SHLEKYFFVR (299 aa)). ATP is bound at residue 8 to 15 (GRAGAGKT). Residues 279–590 (GNTARFKSPA…LVASLERSRN (312 aa)) enclose the UvrD-like helicase C-terminal domain. Cys792, Cys1112, Cys1115, and Cys1121 together coordinate [4Fe-4S] cluster.

The protein belongs to the helicase family. AddB/RexB type 1 subfamily. In terms of assembly, heterodimer of AddA and AddB. Mg(2+) is required as a cofactor. Requires [4Fe-4S] cluster as cofactor.

Its function is as follows. The heterodimer acts as both an ATP-dependent DNA helicase and an ATP-dependent, dual-direction single-stranded exonuclease. Recognizes the chi site generating a DNA molecule suitable for the initiation of homologous recombination. The AddB subunit has 5' -&gt; 3' nuclease activity but not helicase activity. The sequence is that of ATP-dependent helicase/deoxyribonuclease subunit B from Pelotomaculum thermopropionicum (strain DSM 13744 / JCM 10971 / SI).